The sequence spans 1578 residues: Mediator of RNA polymerase II transcription subunit 14 (1578 aa).

Residues 49–53 (LAELL) carry the LXXLL motif 1 motif. Residues 561-582 (SQSVTAGGTSQSSAPSAATTES) form a disordered region. The span at 565 to 580 (TAGGTSQSSAPSAATT) shows a compositional bias: low complexity. The LXXLL motif 2 signature appears at 739-743 (LKRLL). Disordered regions lie at residues 1009–1173 (RRRS…PDHK) and 1510–1578 (APGG…GGPN). The span at 1084–1093 (SQSHPNFNMT) shows a compositional bias: polar residues. Composition is skewed to pro residues over residues 1095 to 1104 (PPAPHMPHPS) and 1157 to 1167 (PGMPRPSPRPG). Gly residues-rich tracts occupy residues 1510–1521 (APGGPGGPGPMG) and 1547–1578 (MGGGGQQSNYGGMVGGGAQSGVPGGPGAGGPN).

Belongs to the Mediator complex subunit 14 family. Component of the Mediator complex.

It is found in the nucleus. Component of the Mediator complex, a coactivator involved in the regulated transcription of nearly all RNA polymerase II-dependent genes. Mediator functions as a bridge to convey information from gene-specific regulatory proteins to the basal RNA polymerase II transcription machinery. Mediator is recruited to promoters by direct interactions with regulatory proteins and serves as a scaffold for the assembly of a functional preinitiation complex with RNA polymerase II and the general transcription factors. This chain is Mediator of RNA polymerase II transcription subunit 14 (MED14), found in Aedes aegypti (Yellowfever mosquito).